Here is a 469-residue protein sequence, read N- to C-terminus: MKSAVENLTPTRVKLNVEVPFEELKPSIDEAYKTVASQIQVPGFRKGKVPAKLIDQRVGRGYVLETAINEGLNGWYQEAVQETGIRPLSRPEVEITEVPDPTATDGELKFHAEVDVRPEIELPDYSGIKVEVAAAESSEADVDKALDELRGRFGTLKSVDRPAADGDFLTIDITASIDGAEVDSASGLSYQVGAGTMLEGLDEAVTGLSADEDAIFDTTLVGGDHAGEAAQVKVVVKSVKERELPEADDDFAQLASEFDTLAELREDLAKQAAESKVVEQGVEARDKVLDKLVELVEVPVPASVVEEQLEQHFKAENSHGDGEHDTEEHRAEVKANTERAFQNEIILDAIADKEEVGVSQNELIDYIVTTASQYGMDPNQFAQIIDQSGQVPMMVSEVRRRKALAVVLGQAEVTDSEGNKVDLSDFVRPGGEEEAAEAEAAPAVDSDAVEGEAATEEAAPSDDPAAVKF.

One can recognise a PPIase FKBP-type domain in the interval 166–245 (GDFLTIDITA…VKSVKERELP (80 aa)). The interval 430 to 469 (GGEEEAAEAEAAPAVDSDAVEGEAATEEAAPSDDPAAVKF) is disordered.

Belongs to the FKBP-type PPIase family. Tig subfamily.

It is found in the cytoplasm. The enzyme catalyses [protein]-peptidylproline (omega=180) = [protein]-peptidylproline (omega=0). In terms of biological role, involved in protein export. Acts as a chaperone by maintaining the newly synthesized protein in an open conformation. Functions as a peptidyl-prolyl cis-trans isomerase. The chain is Trigger factor from Arthrobacter sp. (strain FB24).